Here is a 700-residue protein sequence, read N- to C-terminus: E3 ubiquitin-protein ligase SspH1 (700 aa).

The interaction with target proteins stretch occupies residues 1–395; that stretch reads MFNIRNTQPS…HSGIRIHFDM (395 aa). 8 LRR repeats span residues 217-238, 239-257, 258-279, 280-297, 298-319, 320-337, 338-360, and 361-381; these read HITT…PEGL, RELE…SLPQ, GLQK…PPGL, GDLA…EMPP, ALRE…PSGL, QKLW…EMSP, GLQE…TGLS, and SAAR…QALR. The interval 396-403 is linker; that stretch reads AGPSVPRE. Residues 404–700 form an E3 ubiquitin-protein ligase catalytic domain region; sequence ARALHLAVAD…SYLTARWRLN (297 aa). The NEL domain occupies 406–700; sequence ALHLAVADWL…SYLTARWRLN (295 aa). Residue Cys492 is the Glycyl thioester intermediate of the active site.

The protein belongs to the LRR-containing bacterial E3 ligase family. Interacts (via leucine-rich repeat region) with host PKN1 (via the second REM repeat). In terms of processing, ubiquitinated in the presence of host E1 ubiquitin-activating enzyme, E2 ubiquitin-conjugating enzyme and ubiquitin.

Its subcellular location is the secreted. It is found in the host cytoplasm. It localises to the host nucleus. The enzyme catalyses S-ubiquitinyl-[E2 ubiquitin-conjugating enzyme]-L-cysteine + [acceptor protein]-L-lysine = [E2 ubiquitin-conjugating enzyme]-L-cysteine + N(6)-ubiquitinyl-[acceptor protein]-L-lysine.. With respect to regulation, exists in an autoinhibited state in the absence of substrate protein, due to interactions of the leucine-rich repeat domain with the catalytic domain. Is activated upon binding to a substrate protein. In terms of biological role, effector proteins function to alter host cell physiology and promote bacterial survival in host tissues. This protein is an E3 ubiquitin-protein ligase that interferes with the host's ubiquitination pathway and targets host proteins for proteasomal degradation. Can ubiquitinate ubiquitin, giving rise to polyubiquitin chains (in vitro). Polyubiquitinates host PKN1, leading to its proteasomal degradation. Down-modulates production of host pro-inflammatory cytokines by inhibiting NF-kappa-B-dependent gene expression; this depends only partially on its E3 ubiquitin-protein ligase activity. This chain is E3 ubiquitin-protein ligase SspH1 (sspH1), found in Salmonella typhimurium (strain 14028s / SGSC 2262).